A 217-amino-acid polypeptide reads, in one-letter code: 3,4-dihydroxy-2-butanone 4-phosphate synthase (217 aa).

Residues 37–38 (RE), D42, 150–154 (RQGHT), and E174 contribute to the D-ribulose 5-phosphate site. E38 is a Mg(2+) binding site. H153 contributes to the Mg(2+) binding site.

The protein belongs to the DHBP synthase family. Homodimer. Requires Mg(2+) as cofactor. The cofactor is Mn(2+).

It catalyses the reaction D-ribulose 5-phosphate = (2S)-2-hydroxy-3-oxobutyl phosphate + formate + H(+). Its pathway is cofactor biosynthesis; riboflavin biosynthesis; 2-hydroxy-3-oxobutyl phosphate from D-ribulose 5-phosphate: step 1/1. Catalyzes the conversion of D-ribulose 5-phosphate to formate and 3,4-dihydroxy-2-butanone 4-phosphate. The protein is 3,4-dihydroxy-2-butanone 4-phosphate synthase of Photorhabdus laumondii subsp. laumondii (strain DSM 15139 / CIP 105565 / TT01) (Photorhabdus luminescens subsp. laumondii).